Here is a 143-residue protein sequence, read N- to C-terminus: ATP synthase subunit 9, mitochondrial (143 aa).

A mitochondrion-targeting transit peptide spans 1-62 (MAASRVFAQR…ARQAFAARRQ (62 aa)). 2 helical membrane-spanning segments follow: residues 85–105 (IGLGGAGIGIGVVFGSLLLAV) and 119–139 (AILGFAFVEAIGLFDLMVAMM).

Belongs to the ATPase C chain family. In terms of assembly, F-type ATPases have 2 components, CF(1) - the catalytic core - and CF(0) - the membrane proton channel. CF(1) has five subunits: alpha(3), beta(3), gamma(1), delta(1), epsilon(1). CF(0) has three main subunits: a, b and c.

Its subcellular location is the mitochondrion membrane. Its function is as follows. Mitochondrial membrane ATP synthase (F(1)F(0) ATP synthase or Complex V) produces ATP from ADP in the presence of a proton gradient across the membrane which is generated by electron transport complexes of the respiratory chain. F-type ATPases consist of two structural domains, F(1) - containing the extramembraneous catalytic core and F(0) - containing the membrane proton channel, linked together by a central stalk and a peripheral stalk. During catalysis, ATP synthesis in the catalytic domain of F(1) is coupled via a rotary mechanism of the central stalk subunits to proton translocation. Part of the complex F(0) domain. A homomeric c-ring of probably 10 subunits is part of the complex rotary element. This is ATP synthase subunit 9, mitochondrial (atp9) from Emericella nidulans (strain FGSC A4 / ATCC 38163 / CBS 112.46 / NRRL 194 / M139) (Aspergillus nidulans).